We begin with the raw amino-acid sequence, 591 residues long: Aspartate--tRNA(Asp/Asn) ligase (591 aa).

An L-aspartate-binding site is contributed by E175. An aspartate region spans residues 199 to 202 (QQFK). R221 and H453 together coordinate L-aspartate. 221-223 (RDE) is an ATP binding site. E486 contributes to the ATP binding site. Residue R493 coordinates L-aspartate. Residue 538–541 (GIDR) participates in ATP binding.

It belongs to the class-II aminoacyl-tRNA synthetase family. Type 1 subfamily. Homodimer.

The protein localises to the cytoplasm. The enzyme catalyses tRNA(Asx) + L-aspartate + ATP = L-aspartyl-tRNA(Asx) + AMP + diphosphate. Functionally, aspartyl-tRNA synthetase with relaxed tRNA specificity since it is able to aspartylate not only its cognate tRNA(Asp) but also tRNA(Asn). Reaction proceeds in two steps: L-aspartate is first activated by ATP to form Asp-AMP and then transferred to the acceptor end of tRNA(Asp/Asn). This chain is Aspartate--tRNA(Asp/Asn) ligase, found in Roseobacter denitrificans (strain ATCC 33942 / OCh 114) (Erythrobacter sp. (strain OCh 114)).